Consider the following 172-residue polypeptide: MPTISTAECFTHGKVANELHAFARGYPHEYLFSIDRKKVDISVVAGMFIPTLTGVRTLLHFEPLEPRLVIDTVKVYEQDQDCIMACRMAEAVMRVTGADIGIGTTAGIGKGAVAIASQDKIYSKVTRIDADFRTSDAKKLMQREKSGVFTALRLFEEFLLEGEFPDSYNKYI.

This sequence belongs to the UPF0254 family.

This chain is UPF0254 protein Mlab_1743, found in Methanocorpusculum labreanum (strain ATCC 43576 / DSM 4855 / Z).